The primary structure comprises 267 residues: 5'-nucleotidase SurE (267 aa).

A divalent metal cation contacts are provided by D14, D15, S45, and N100.

The protein belongs to the SurE nucleotidase family. A divalent metal cation serves as cofactor.

It localises to the cytoplasm. It catalyses the reaction a ribonucleoside 5'-phosphate + H2O = a ribonucleoside + phosphate. Its function is as follows. Nucleotidase that shows phosphatase activity on nucleoside 5'-monophosphates. This is 5'-nucleotidase SurE from Methanosarcina acetivorans (strain ATCC 35395 / DSM 2834 / JCM 12185 / C2A).